Consider the following 442-residue polypeptide: Serine protease AprX (442 aa).

Positions 122–439 (KALLDTATEA…AGAVNAENSV (318 aa)) constitute a Peptidase S8 domain. Active-site charge relay system residues include aspartate 155 and histidine 187. The tract at residues 318–337 (DNNTASSDDDTVASFSSRGP) is disordered. Catalysis depends on serine 384, which acts as the Charge relay system. The tract at residues 423–442 (EDPNIYGAGAVNAENSVPGQ) is disordered.

Belongs to the peptidase S8 family.

The protein localises to the cytoplasm. Is completely inhibited by phenylmethanesulphonylfluoride (PMSF) in vitro. Its function is as follows. Displays serine protease activity. Seems to have a broad substrate specificity. In Bacillus subtilis (strain 168), this protein is Serine protease AprX (aprX).